The primary structure comprises 156 residues: Ribosomal RNA large subunit methyltransferase H (156 aa).

Residues Leu73, Gly104, and 123 to 128 (LSSLTL) contribute to the S-adenosyl-L-methionine site.

The protein belongs to the RNA methyltransferase RlmH family. As to quaternary structure, homodimer.

Its subcellular location is the cytoplasm. The enzyme catalyses pseudouridine(1915) in 23S rRNA + S-adenosyl-L-methionine = N(3)-methylpseudouridine(1915) in 23S rRNA + S-adenosyl-L-homocysteine + H(+). In terms of biological role, specifically methylates the pseudouridine at position 1915 (m3Psi1915) in 23S rRNA. This is Ribosomal RNA large subunit methyltransferase H from Bordetella bronchiseptica (strain ATCC BAA-588 / NCTC 13252 / RB50) (Alcaligenes bronchisepticus).